The chain runs to 145 residues: Hemoglobin subunit beta (145 aa).

Residues 1 to 145 (MLTAEEKAAV…VANALAHRYH (145 aa)) form the Globin domain. T11 carries the post-translational modification Phosphothreonine. An N6-acetyllysine modification is found at K58. H62 is a binding site for heme b. An N6-acetyllysine modification is found at K81. H91 is a binding site for heme b. S-nitrosocysteine is present on C92.

This sequence belongs to the globin family. Heterotetramer of two alpha chains and two beta chains. As to expression, red blood cells.

Its function is as follows. Involved in oxygen transport from the lung to the various peripheral tissues. This Alces alces alces (European moose) protein is Hemoglobin subunit beta (HBB).